Here is a 545-residue protein sequence, read N- to C-terminus: Membrane protein insertase YidC (545 aa).

4 consecutive transmembrane segments (helical) span residues Ile350–Tyr370, Leu424–Val444, Ala461–Leu481, and Pro498–Val518.

This sequence belongs to the OXA1/ALB3/YidC family. Type 1 subfamily. Interacts with the Sec translocase complex via SecD. Specifically interacts with transmembrane segments of nascent integral membrane proteins during membrane integration.

It localises to the cell inner membrane. In terms of biological role, required for the insertion and/or proper folding and/or complex formation of integral membrane proteins into the membrane. Involved in integration of membrane proteins that insert both dependently and independently of the Sec translocase complex, as well as at least some lipoproteins. Aids folding of multispanning membrane proteins. The chain is Membrane protein insertase YidC from Neisseria gonorrhoeae (strain ATCC 700825 / FA 1090).